The sequence spans 213 residues: Glycerol-3-phosphate acyltransferase (213 aa).

The next 6 helical transmembrane spans lie at 3-23, 54-76, 83-100, 110-130, 142-162, and 163-183; these read ILLLILIAYLLGSIQTGLWIG, TITFLVDMLKGTLAVLLPIWLGI, IIGFFAIIGHVFPFFTGF, AGVLLGFVPLYFVFLLLVFAL, SITAAVVGLITLATFPAIHFL, and LDGYDPIFSAVLIIIVLVIIF.

This sequence belongs to the PlsY family. In terms of assembly, probably interacts with PlsX.

Its subcellular location is the cell membrane. It carries out the reaction an acyl phosphate + sn-glycerol 3-phosphate = a 1-acyl-sn-glycero-3-phosphate + phosphate. It participates in lipid metabolism; phospholipid metabolism. Functionally, catalyzes the transfer of an acyl group from acyl-phosphate (acyl-PO(4)) to glycerol-3-phosphate (G3P) to form lysophosphatidic acid (LPA). This enzyme utilizes acyl-phosphate as fatty acyl donor, but not acyl-CoA or acyl-ACP. This Streptococcus thermophilus (strain ATCC BAA-491 / LMD-9) protein is Glycerol-3-phosphate acyltransferase.